Here is a 238-residue protein sequence, read N- to C-terminus: Small ribosomal subunit protein uS2 (238 aa).

This sequence belongs to the universal ribosomal protein uS2 family.

This is Small ribosomal subunit protein uS2 from Prochlorococcus marinus (strain MIT 9211).